The sequence spans 2201 residues: MDVHLIELRDLVRKWVPDDLELSEQKNIMLAQTQIRATVVESLKLLSTIVEVDSCKKHSCVHNTSKTVNAILREHKIIGPTLPDVTPDGYCVIGDVLILLEVFVRTNQESFEKKFNQDFEKLMQMSADLKKCGVTLVPTIDGRSTYYVDFIPDWVVERLRWLISRLMSSLREDGQEIEELEYERLISSLSSLENQSLGLESLLAMREKGLSYKETLDKLFLEGMENKLTVDESRTRIMKMFQIFRTLLESGYLERKYQTTDREDMLKRLRDHEFIVCSKSVEYTFDCPNCSVHLYKVLNLLLNQGSRGAPHQCLGEYMKTLSICNKIKSMKILNTRRNTLLILDTIMLNKFLDLEKVFGHVVVERVMIMQSLMTVNDRLLSIDVLMEMLEKKMTRNPLWFLKVNEKLRKLCPPEVYQSIEEYVHEVDRDHWFELKLTLHQTWPAKPLIDYKGKMRCTCVEKDSNNKNQLSDLTEEKFQLLLKKLSSFCLGITNSLKTSAVAKLRVNQPDDYYGKVTCSEVFFQSLDKEHSAVLLYQKTGEKSRAYGLAFNNVVTGQYTTEASFYCDPKRFFLPIMSDVVLFRMCNEMLSWLDYLSDDVMLEVRTCLYRLVLSILCTPSKRVQVYIQGLRYFIMAFVNEFHCTGLLDKLKVTALTESERYCMKLCDDLVVKVLNSVEDENMAKAFKFVLNTSYLCHLITKETPDRLTDQIKCFEKFLEPKLDFGSVIVNPDSSCELTAGQEEQFYQGLEKLFTDKKLESSYANKPGVCKEVLNVCMSLFNSGALEVKPLLNHDPITPSFTSTALDLSSNKSVVVPKLDELGEVLTEYDYSKLVSSVVVDLVEHFKTKGKYVVSPRSLQYKIYKRLSNLVQQRAGKGNKESELTEEEFLEQVTAEQLEVINKVETKVSRTLSGIKLSSDTENAKHDDDYHLKKLWSKDIMVRIKAETSLHEVKDFNVDTLPFDLYRELVDAIYNDPAANSHYFSERIFNPCPLELLIKNLTLKAYKEEDFFECFKYILISSNFDNKVGKYDHKNRSRLGLSSAALLVKDEARISMRESNSESIAKRLDKSFFTNSSLRNLCFYSDESPTERTSVSSNVGKLKFGLSYKEQVGGNRELYVGDLNTKLTTRLVEDYAESLTSDMKYTCLNNENEFERALLDMKSVVRQSGLAVSMDHSKWGPHMSPALFSLMLRGLDFRLKDGTLIDKEAVVNILSWHIHKMVEVPFNVVEAYLKGFIKRGLGLMDRGGATRVEEFMFGYFDQGIVPSHISSVIDMGQGILHNLSDLYGLITEQFIVYALDLCYSSSFMAYTSSDDEILLSISNSFKRNDGSMDMDLAIEALEFHYFLSDRLNKFVSPKTVAGTFASEFKSRFFIWSQEVPLLTKFVAASLHNVKAKAPSQLAETIDTILDQSVANGVSIEIIGAIAPRTNALITYSGHPFNLFLCLEETDVRDWVDGSRGYRLQRSIENAFPDDVLPEIIRSACRKIFYRIQSGTLEEDYIVTTLQQSPDDCLKQMLTSCDVEKEAIDDICNYRWLNLRAHGDLRLVLRTKIMTSTRTLQKEEVPSLIKSVQSKLSKNFVRGAKKILADAINKSAFQSCISSGFVGVCKSMGSKCVRDGKGGFKYIKDILKEIKHHEKPDCHFCKELKGIYCSELLENISEFSRPLFWDYFSLVLSNACELGNWVFCKIEIPKSVYHLNNPNHFWPIKPSSHAELEEKVGMNHVLYSIRRNFPVLFDEHISPYLSDLNMLKLNWVQKIRFLDICVAIDMTSECLGIISHIIRRKREELYIVKQSELSMSHTRVSLPLERGFNIEPDEVCHNFLLQILFESMIHPVLLTTSQFKRYFWYSEVELLPKEALHDLGQFTQFIIDCKVLNSSRAMCLDDLDVGYVSSKVKRTDTYLNLSTFMTNLDWENRHEYSSFEDLILSSPSEVFLFEITFTFSHIRRSHKFRYDRSTNYILKTKLVIEKSELVNGEDGVYCVTPHSIEYYVSQSSGNHISLDGVSLLVLDPLISGRELVNMDELLQNQDVTFSAPSQILSKIKLDFKPFTKEIKNKFSYKLIGPDVDMSPLHLDKGAIKEGDRIVSQIEIQVSFKSVITAIELLDEDQRKIFVGNLFVYLTSLKSVNRALSMSESDLRLLVENYPSVIEYMLSGCDGWLNCGSFSLIKSKTLQCIMLADERGPYRIKGQNCRRLFPTEEAIEIE.

The interval 26-285 is endonuclease; that stretch reads KNIMLAQTQI…VCSKSVEYTF (260 aa). Mn(2+)-binding residues include glutamate 51, aspartate 88, and glutamate 101. Lysine 114 is an active-site residue. The 197-residue stretch at 1156 to 1352 folds into the RdRp catalytic domain; that stretch reads LDMKSVVRQS…FLSDRLNKFV (197 aa). Aspartate 1312 serves as a coordination point for Mg(2+).

The protein belongs to the Bunyavirales RNA polymerase family. Homomultimer; the oligomeric structure is essential for the polymerase activity. Interacts with nucleoprotein N. Interacts with protein Z; this interaction inhibits viral transcription and replication, Z partially blocks the product exit tunnel for the releasing nascent RNA product. It depends on Mn(2+) as a cofactor. The cofactor is Mg(2+).

The protein resides in the virion. It localises to the host cytoplasm. It carries out the reaction RNA(n) + a ribonucleoside 5'-triphosphate = RNA(n+1) + diphosphate. Functionally, RNA-dependent RNA polymerase, which is responsible for the replication and transcription of the viral RNA genome using antigenomic RNA as an intermediate. During transcription, synthesizes subgenomic RNAs and assures their capping by a cap-snatching mechanism, which involves the endonuclease activity cleaving the host capped pre-mRNAs. These short capped RNAs are then used as primers for viral transcription. The 3'-end of subgenomic mRNAs molecules are heterogeneous and not polyadenylated. The replicase function is to direct synthesis of antigenomic and genomic RNA which are encapsidated and non capped. As a consequence of the use of the same enzyme for both transcription and replication, these mechanisms need to be well coordinated. These processes may be regulated by proteins N and Z in a dose-dependent manner. Z protein inhibits the viral polymerase L und thus the viral transcription and RNA synthesis. This chain is RNA-directed RNA polymerase L, found in Oecomys bicolor (Bicolored arboreal rice rat).